Reading from the N-terminus, the 449-residue chain is Phosphoglucosamine mutase (449 aa).

The Phosphoserine intermediate role is filled by Ser-101. Positions 101, 242, 244, and 246 each coordinate Mg(2+). Phosphoserine is present on Ser-101.

It belongs to the phosphohexose mutase family. Mg(2+) is required as a cofactor. In terms of processing, activated by phosphorylation.

It carries out the reaction alpha-D-glucosamine 1-phosphate = D-glucosamine 6-phosphate. In terms of biological role, catalyzes the conversion of glucosamine-6-phosphate to glucosamine-1-phosphate. The sequence is that of Phosphoglucosamine mutase from Bradyrhizobium sp. (strain BTAi1 / ATCC BAA-1182).